The primary structure comprises 1426 residues: Homeobox protein cut-like 2 (1426 aa).

The disordered stretch occupies residues 77 to 104 (PEPPSAREQNEGTCPTGHTPANGNHLPG). The residue at position 81 (serine 81) is a Phosphoserine. Positions 131-311 (ITLAARLGEA…IKTELSILRA (181 aa)) form a coiled coil. 6 disordered regions span residues 351 to 419 (ALLA…FPSL), 460 to 488 (KPPS…GPEE), 599 to 628 (EIES…STSE), 653 to 676 (ESGP…TASQ), 743 to 769 (YASV…PRGD), and 904 to 977 (LGQG…SSSQ). Pro residues predominate over residues 374–395 (PPYPPQLPPPPGPEDPLSPSPA). 2 stretches are compositionally biased toward low complexity: residues 397 to 408 (PLLGPSLGPDGP) and 460 to 470 (KPPSAPAASVP). The segment at residues 482–569 (DGAGPEEEQL…VLALRTIQVR (88 aa)) is a DNA-binding region (CUT 1). Residues 587 to 655 (DAIKSILEQA…QQALLEMESG (69 aa)) are a coiled coil. The segment covering 608–628 (SKNSPASVSIPNGTASSSTSE) has biased composition (polar residues). Low complexity-rich tracts occupy residues 743-757 (YASV…SSYS), 910-928 (QAPT…EPTS), and 965-976 (SSSLGGKPFSSS). The CUT 2 DNA-binding region spans 828-915 (QYELYMYREV…QGQGQAPTQQ (88 aa)). The segment at residues 983–1070 (QEMVAMSPEL…VEKLRDMKKL (88 aa)) is a DNA-binding region (CUT 3). A DNA-binding region (homeobox) is located at residues 1113 to 1172 (AKKPRVVLAPAEKEALRKAYQLEPYPSQQTIELLSFQLNLKTNTVINWFHNYRSRMRREM). The tract at residues 1177–1392 (TQDDPDFDPS…AALHPSTKVN (216 aa)) is disordered. Composition is skewed to basic and acidic residues over residues 1233-1245 (APDR…KQEE) and 1260-1274 (DPDR…EHTH). Residues 1318–1332 (LSFKSTSESSCCSLE) show a composition bias toward low complexity. Residues 1338–1350 (PSVISSPDLTTCV) are compositionally biased toward polar residues. Residues 1351–1364 (SPAPSSSAPISPSL) show a composition bias toward low complexity.

Belongs to the CUT homeobox family. In terms of tissue distribution, restricted to neural tissues. Expressed exclusively in the central and peripheral nervous systems.

It is found in the nucleus. In terms of biological role, transcription factor involved in the control of neuronal proliferation and differentiation in the brain. Regulates dendrite development and branching, dendritic spine formation, and synaptogenesis in cortical layers II-III. Binds to DNA in a sequence-specific manner. In Mus musculus (Mouse), this protein is Homeobox protein cut-like 2 (Cux2).